The primary structure comprises 348 residues: Peroxidase 40 (348 aa).

The N-terminal stretch at 1 to 21 (MKNLFNLFLMFFFAMPILSLS) is a signal peptide. N-linked (GlcNAc...) asparagine glycosylation is present at Asn-26. 4 cysteine pairs are disulfide-bonded: Cys-59–Cys-139, Cys-92–Cys-97, Cys-145–Cys-344, and Cys-224–Cys-256. Residue His-90 is the Proton acceptor of the active site. Ca(2+) is bound by residues Asp-91, Val-94, Gly-96, Asp-98, and Ser-100. A disordered region spans residues 170–189 (GRKDSRTASKQAATNGLPSP). The segment covering 177-189 (ASKQAATNGLPSP) has biased composition (polar residues). Pro-187 is a substrate binding site. Asn-190 carries an N-linked (GlcNAc...) asparagine glycan. His-217 is a heme b binding site. Thr-218 lines the Ca(2+) pocket. Asp-269, Thr-272, and Asp-277 together coordinate Ca(2+).

It belongs to the peroxidase family. Classical plant (class III) peroxidase subfamily. Heme b serves as cofactor. The cofactor is Ca(2+).

Its subcellular location is the secreted. The catalysed reaction is 2 a phenolic donor + H2O2 = 2 a phenolic radical donor + 2 H2O. Its function is as follows. Removal of H(2)O(2), oxidation of toxic reductants, biosynthesis and degradation of lignin, suberization, auxin catabolism, response to environmental stresses such as wounding, pathogen attack and oxidative stress. These functions might be dependent on each isozyme/isoform in each plant tissue. This is Peroxidase 40 (PER40) from Arabidopsis thaliana (Mouse-ear cress).